Reading from the N-terminus, the 400-residue chain is MIIKPKTRGFICTTTHPVGCEANVLEQINTTKAKGPITNGPKKVLVIGSSSGYGLSSRIAAAFGSGAATLGVFFEKPGTEKKPGTAGWYNSAAFDKFAKADGLYSKSINGDAFSHEAKQKAIDLIKADLGQIDMVVYSLASPVRKLPDSGELIRSSLKPIGETYTATAVDTNKDLIIETSVEPASEQEIQDTVTVMGGEDWELWLAALSDAGVLADGCKTVAYSYIGTELTWPIYWHGALGKAKMDLDRAAKALDEKLSTTGGSANVAVLKSVVTQASSAIPVMPLYIAMVFKKMREEGLHEGCMEQINRMFAERLYREDGQAPQVDDANRLRLDDWELREEIQQHCRDLWPSVTTENLSELTDYREYKDEFLKLFGFGVEGVDYDADVNPEVNFDVEQF.

NAD(+) is bound by residues 48–53 (GSSSGY), 74–75 (FE), 111–112 (DA), and 139–140 (LA). Tyr225 contributes to the substrate binding site. The active-site Proton donor is Tyr235. NAD(+) contacts are provided by residues Lys244 and 273-275 (VVT).

It belongs to the TER reductase family. As to quaternary structure, monomer.

The catalysed reaction is a 2,3-saturated acyl-[ACP] + NAD(+) = a (2E)-enoyl-[ACP] + NADH + H(+). Its pathway is lipid metabolism; fatty acid biosynthesis. In terms of biological role, involved in the final reduction of the elongation cycle of fatty acid synthesis (FAS II). Catalyzes the reduction of a carbon-carbon double bond in an enoyl moiety that is covalently linked to an acyl carrier protein (ACP). The chain is Enoyl-[acyl-carrier-protein] reductase [NADH] from Shewanella woodyi (strain ATCC 51908 / MS32).